The following is a 349-amino-acid chain: tRNA pseudouridine synthase D (349 aa).

Residue phenylalanine 27 participates in substrate binding. Aspartate 80 acts as the Nucleophile in catalysis. Asparagine 129 serves as a coordination point for substrate. The TRUD domain maps to 155–303 (GVPNYFGAQR…VEASRRAMLL (149 aa)). Substrate is bound at residue phenylalanine 329.

It belongs to the pseudouridine synthase TruD family.

The enzyme catalyses uridine(13) in tRNA = pseudouridine(13) in tRNA. Functionally, responsible for synthesis of pseudouridine from uracil-13 in transfer RNAs. This Salmonella newport (strain SL254) protein is tRNA pseudouridine synthase D.